A 149-amino-acid chain; its full sequence is IQ domain-containing protein F5 (149 aa).

IQ domains lie at 12–41 (ENKAIVSIQAWWRGTLVRRTLLHAALRAWI) and 68–97 (QEWAVVKLQSWVRMWCIRLRYLRLLHAVRI).

The sequence is that of IQ domain-containing protein F5 (IQCF5) from Bos taurus (Bovine).